Consider the following 609-residue polypeptide: NURS complex subunit pir2 (609 aa).

A compositionally biased stretch (basic and acidic residues) spans 1 to 25 (MSEVHQESEVEYSRWKRERSPERSQ). Disordered regions lie at residues 1–60 (MSEV…RASG) and 187–210 (EKPSIPDNDTDDSILPSNDPQLSK). The span at 27–36 (RSQSPPGEQS) shows a compositional bias: low complexity. Serine 28 and serine 30 each carry phosphoserine. Basic and acidic residues predominate over residues 37–57 (AYHRERSPLRKRGNYYDDRTR). Polar residues predominate over residues 201 to 210 (LPSNDPQLSK). A C2H2-type zinc finger spans residues 474–499 (YRCHVGTCAKLFLGPEFVRKHINKKH).

The protein belongs to the ARS2 family. As to quaternary structure, interacts with ccr4.

It localises to the nucleus. The polypeptide is NURS complex subunit pir2 (Schizosaccharomyces pombe (strain 972 / ATCC 24843) (Fission yeast)).